The following is a 343-amino-acid chain: MTDTAPTDITTATDITTATGAATGTGRGPAATARGHAALAKTQVLIEALPWLSRFQGATIVIKYGGNAMTEPALRAAFAADIVFLRYSGLRVVVVHGGGPQITAHLARLGVESTFVGGLRVTTPETMDVVRMVLLGQVNRDVVGLVNDHGPFAVGLSGEDANLFTARRRPAIVDGQEVDVGLVGDIVEVRAETVDALLDSGKVPVVASVARGIDGGVYNVNADTAAAELAVALGATKLVVLTDVEGLYADWPTSDEVLSELSITELEQLLPTLAAGMIPKMEACRRAVRGGVPQAHVLDGRVPHAVLLEIFTDDGIGTLITPDRDTANRVAPAAPTAYSGGRP.

Residues G98–G99, R120, and N219 contribute to the substrate site.

Belongs to the acetylglutamate kinase family. ArgB subfamily.

It is found in the cytoplasm. The catalysed reaction is N-acetyl-L-glutamate + ATP = N-acetyl-L-glutamyl 5-phosphate + ADP. It functions in the pathway amino-acid biosynthesis; L-arginine biosynthesis; N(2)-acetyl-L-ornithine from L-glutamate: step 2/4. Its function is as follows. Catalyzes the ATP-dependent phosphorylation of N-acetyl-L-glutamate. This is Acetylglutamate kinase from Frankia alni (strain DSM 45986 / CECT 9034 / ACN14a).